A 263-amino-acid chain; its full sequence is Small ribosomal subunit protein uS2m (263 aa).

Residues 1–15 (MLSRKLSPEQLVARR) constitute a mitochondrion transit peptide.

It belongs to the universal ribosomal protein uS2 family. As to quaternary structure, component of the mitochondrial small ribosomal subunit (mt-SSU). Mature yeast 74S mitochondrial ribosomes consist of a small (37S) and a large (54S) subunit. The 37S small subunit contains a 15S ribosomal RNA (15S mt-rRNA) and at least 32 different proteins. The 54S large subunit contains a 21S rRNA (21S mt-rRNA) and at least 45 different proteins.

The protein resides in the mitochondrion. Its function is as follows. Component of the mitochondrial ribosome (mitoribosome), a dedicated translation machinery responsible for the synthesis of mitochondrial genome-encoded proteins, including at least some of the essential transmembrane subunits of the mitochondrial respiratory chain. The mitoribosomes are attached to the mitochondrial inner membrane and translation products are cotranslationally integrated into the membrane. The polypeptide is Small ribosomal subunit protein uS2m (Schizosaccharomyces pombe (strain 972 / ATCC 24843) (Fission yeast)).